The primary structure comprises 152 residues: Transcriptional regulator MraZ (152 aa).

2 consecutive SpoVT-AbrB domains span residues 5–52 (ATLV…PLPE) and 81–124 (ASEC…DETT).

The protein belongs to the MraZ family. In terms of assembly, forms oligomers.

It is found in the cytoplasm. The protein resides in the nucleoid. Its function is as follows. Negatively regulates its own expression and that of the subsequent genes in the proximal part of the division and cell wall (dcw) gene cluster. Acts by binding directly to DNA. May also regulate the expression of genes outside the dcw cluster. The protein is Transcriptional regulator MraZ of Escherichia coli O127:H6 (strain E2348/69 / EPEC).